Here is a 249-residue protein sequence, read N- to C-terminus: Proteasome activator complex subunit 1 (249 aa).

The interval P60–G102 is disordered. Residues P68–G98 show a composition bias toward basic and acidic residues.

Belongs to the PA28 family. Heterodimer of PSME1 and PSME2, which forms a hexameric ring. PSME1 can form homoheptamers.

Implicated in immunoproteasome assembly and required for efficient antigen processing. The PA28 activator complex enhances the generation of class I binding peptides by altering the cleavage pattern of the proteasome. The protein is Proteasome activator complex subunit 1 (Psme1) of Rattus norvegicus (Rat).